The chain runs to 89 residues: UPF0223 protein BPUM_1362 (89 aa).

This sequence belongs to the UPF0223 family.

The sequence is that of UPF0223 protein BPUM_1362 from Bacillus pumilus (strain SAFR-032).